The sequence spans 154 residues: Xanthine-guanine phosphoribosyltransferase (154 aa).

Residues Arg-37–Gly-38, Arg-69, and Glu-88–Thr-96 each bind 5-phospho-alpha-D-ribose 1-diphosphate. A GMP-binding site is contributed by Arg-69. Position 89 (Asp-89) interacts with Mg(2+). 2 residues coordinate guanine: Asp-92 and Ile-135. Positions 92 and 135 each coordinate xanthine. GMP is bound by residues Asp-92–Thr-96 and Trp-134–Ile-135.

It belongs to the purine/pyrimidine phosphoribosyltransferase family. XGPT subfamily. As to quaternary structure, homotetramer. Requires Mg(2+) as cofactor.

It is found in the cell inner membrane. It catalyses the reaction GMP + diphosphate = guanine + 5-phospho-alpha-D-ribose 1-diphosphate. The catalysed reaction is XMP + diphosphate = xanthine + 5-phospho-alpha-D-ribose 1-diphosphate. It carries out the reaction IMP + diphosphate = hypoxanthine + 5-phospho-alpha-D-ribose 1-diphosphate. Its pathway is purine metabolism; GMP biosynthesis via salvage pathway; GMP from guanine: step 1/1. It functions in the pathway purine metabolism; XMP biosynthesis via salvage pathway; XMP from xanthine: step 1/1. Functionally, purine salvage pathway enzyme that catalyzes the transfer of the ribosyl-5-phosphate group from 5-phospho-alpha-D-ribose 1-diphosphate (PRPP) to the N9 position of the 6-oxopurines guanine and xanthine to form the corresponding ribonucleotides GMP (guanosine 5'-monophosphate) and XMP (xanthosine 5'-monophosphate), with the release of PPi. To a lesser extent, also acts on hypoxanthine. In Vibrio vulnificus (strain CMCP6), this protein is Xanthine-guanine phosphoribosyltransferase.